The following is a 158-amino-acid chain: S-ribosylhomocysteine lyase (158 aa).

H54, H58, and C124 together coordinate Fe cation.

This sequence belongs to the LuxS family. In terms of assembly, homodimer. Fe cation serves as cofactor.

The enzyme catalyses S-(5-deoxy-D-ribos-5-yl)-L-homocysteine = (S)-4,5-dihydroxypentane-2,3-dione + L-homocysteine. Its function is as follows. Involved in the synthesis of autoinducer 2 (AI-2) which is secreted by bacteria and is used to communicate both the cell density and the metabolic potential of the environment. The regulation of gene expression in response to changes in cell density is called quorum sensing. Catalyzes the transformation of S-ribosylhomocysteine (RHC) to homocysteine (HC) and 4,5-dihydroxy-2,3-pentadione (DPD). In Limosilactobacillus reuteri (Lactobacillus reuteri), this protein is S-ribosylhomocysteine lyase.